A 192-amino-acid chain; its full sequence is Mitochondrial import inner membrane translocase subunit TIM18 (192 aa).

A mitochondrion-targeting transit peptide spans 1–42 (MLLFPGLKPVLNASTVIVNPVRAVFPGLVLSTKRSFYSINRL). At 43–88 (NAENKINDIANTSKEASSSVQMFKPPEFSQFKDSYQKDYERIAKYT) the chain is on the mitochondrial matrix side. A helical membrane pass occupies residues 89 to 109 (LIPLTMVPFYASFTGGVINPL). The Mitochondrial intermembrane portion of the chain corresponds to 110-113 (LDAS). A helical membrane pass occupies residues 114 to 134 (LSSIFLIYLQYGFTSCIIDYI). At 135 to 144 (PKEKYPRWHK) the chain is on the mitochondrial matrix side. The chain crosses the membrane as a helical span at residues 145–165 (LALYCLYGGSMLSLYGIYELE). Residues 166–192 (TKNNGFVDLVKKLWNENDDHLYIFGRN) are Mitochondrial intermembrane-facing.

The protein belongs to the CybS family. In terms of assembly, component of the TIM22 complex, whose core is composed of TIM18, TIM22 and TIM54, associated with the peripheral proteins MRS5/TIM12 and the 70 kDa heterohexamer composed of TIM9 and TIM10 (or TIM8 and TIM13).

The protein localises to the mitochondrion inner membrane. In terms of biological role, component of the TIM22 complex, a complex that mediates the import and insertion of multi-pass transmembrane proteins into the mitochondrial inner membrane. The TIM22 complex forms a twin-pore translocase that uses the membrane potential as external driving force. Its role in the complex is unclear but it may be involved in the assembly and stabilization of the TIM22 complex. The chain is Mitochondrial import inner membrane translocase subunit TIM18 (TIM18) from Saccharomyces cerevisiae (strain ATCC 204508 / S288c) (Baker's yeast).